The following is a 346-amino-acid chain: Probable WRKY transcription factor 54 (346 aa).

The disordered stretch occupies residues 109–130 (PVSCNGGDSGESKKKRLGVGKG). Positions 121–130 (KKKRLGVGKG) are enriched in basic residues. The WRKY DNA-binding region spans 146-214 (VEAKSSEDRY…YIGYHTCTAN (69 aa)). Residues 267 to 282 (VKEEQNNNGDQSKDYY) show a composition bias toward basic and acidic residues. Residues 267 to 286 (VKEEQNNNGDQSKDYYEGSS) are disordered.

This sequence belongs to the WRKY group III family. Interacts with WRKY30. Binds to BZR2/BES1 to cooperatively regulate the expression of target genes. Interacts with ASK7/BIN2. Phosphorylated and destabilized by ASK7/BIN2. Expressed in leaves.

It localises to the nucleus. Functionally, transcription factor. Interacts specifically with the W box (5'-(T)TGAC[CT]-3'), a frequently occurring elicitor-responsive cis-acting element. Together with WRKY70, negative regulator of developmental senescence, probably via the regulation of several senescence-associated markers genes. Positive regulator of EDS1-dependent defense against E.amylovora. In collaboration with WRKY70, prevents stomatal closure and, consequently, osmotic stress tolerance. Together with WRKY46 and WRKY70, promotes brassinosteroid (BR)-regulated plant growth but prevent drought response by modulating gene expression. Negative regulator of SA biosynthesis. Prevents defense response to the necrotrophic pathogens P.carotovorum and B.cinerea, but promotes defense against biotrophic/hemibiotrophic pathogens P.syringae pv. tomato (Pst) DC3000, probably by regulating negatively the jasmonic acid (JA)/ethylene (ET) and positively the salicylic acid (SA) signaling pathways. This chain is Probable WRKY transcription factor 54, found in Arabidopsis thaliana (Mouse-ear cress).